A 368-amino-acid chain; its full sequence is Phosphate acyltransferase (368 aa).

Residues 335 to 368 are disordered; the sequence is VSLGDGEHDAGGAGHTGPAAGQHAEPPAAQSSKA.

The protein belongs to the PlsX family. Homodimer. Probably interacts with PlsY.

It localises to the cytoplasm. It carries out the reaction a fatty acyl-[ACP] + phosphate = an acyl phosphate + holo-[ACP]. The protein operates within lipid metabolism; phospholipid metabolism. Catalyzes the reversible formation of acyl-phosphate (acyl-PO(4)) from acyl-[acyl-carrier-protein] (acyl-ACP). This enzyme utilizes acyl-ACP as fatty acyl donor, but not acyl-CoA. The protein is Phosphate acyltransferase of Burkholderia vietnamiensis (strain G4 / LMG 22486) (Burkholderia cepacia (strain R1808)).